The primary structure comprises 247 residues: Mannose-P-dolichol utilization defect 1 protein (247 aa).

Alanine 2 bears the N-acetylalanine mark. The next 7 helical transmembrane spans lie at 37–57 (CLKI…SLLV), 74–94 (LSLQ…VYSI), 100–120 (FSSW…CFLV), 128–145 (VKGV…LALL), 151–171 (LAVV…GKLL), 185–205 (LSAI…FTSV), and 213–233 (MAGV…QVLF). The PQ-loop 1 domain maps to 39-105 (KILLSKGLGL…NNFPFSSWGE (67 aa)). The PQ-loop 2 domain occupies 159–216 (ASNVPAVVVGKLLQAATNYRNGHTGQLSAITVFMLFGGSLARIFTSVQETGDPLMAGV).

This sequence belongs to the MPDU1 (TC 2.A.43.3) family.

Its subcellular location is the membrane. Its function is as follows. Required for normal utilization of mannose-dolichol phosphate (Dol-P-Man) in the synthesis of N-linked and O-linked oligosaccharides and GPI anchors. The chain is Mannose-P-dolichol utilization defect 1 protein (Mpdu1) from Mus musculus (Mouse).